Reading from the N-terminus, the 502-residue chain is Lysine--tRNA ligase (502 aa).

Mg(2+) contacts are provided by E411 and E418.

It belongs to the class-II aminoacyl-tRNA synthetase family. As to quaternary structure, homodimer. Requires Mg(2+) as cofactor.

The protein localises to the cytoplasm. The enzyme catalyses tRNA(Lys) + L-lysine + ATP = L-lysyl-tRNA(Lys) + AMP + diphosphate. The protein is Lysine--tRNA ligase of Clostridium kluyveri (strain ATCC 8527 / DSM 555 / NBRC 12016 / NCIMB 10680 / K1).